Here is a 189-residue protein sequence, read N- to C-terminus: Ras-like protein 1 (189 aa).

G10–S17 contacts GTP. An Effector region motif is present at residues Y32–Y40. GTP-binding positions include D57–Q61 and N116–D119. C186 is modified (cysteine methyl ester). C186 carries the S-geranylgeranyl cysteine lipid modification. A propeptide spans K187 to L189 (removed in mature form).

The protein belongs to the small GTPase superfamily. Ras family.

The protein localises to the cell membrane. The catalysed reaction is GTP + H2O = GDP + phosphate + H(+). Alternates between an inactive form bound to GDP and an active form bound to GTP. Activated by a guanine nucleotide-exchange factor (GEF) and inactivated by a GTPase-activating protein (GAP). In terms of biological role, ras proteins bind GDP/GTP and possess intrinsic GTPase activity. Plays a role in eye development by regulating cell growth, survival of postmitotic ommatidial cells and differentiation of photoreceptor cells. During larval development, mediates Ptth/tor signaling leading to the production of ecdysone, a hormone required for the initiation of metamorphosis. The polypeptide is Ras-like protein 1 (Drosophila ananassae (Fruit fly)).